The following is a 98-amino-acid chain: NADH-ubiquinone oxidoreductase chain 4L (98 aa).

The next 3 helical transmembrane spans lie at 1–21, 29–49, and 61–81; these read MTLI…GLLM, ALLC…LTIL, and IILL…LVTI.

The protein belongs to the complex I subunit 4L family. In terms of assembly, core subunit of respiratory chain NADH dehydrogenase (Complex I) which is composed of 45 different subunits.

The protein resides in the mitochondrion inner membrane. It catalyses the reaction a ubiquinone + NADH + 5 H(+)(in) = a ubiquinol + NAD(+) + 4 H(+)(out). Functionally, core subunit of the mitochondrial membrane respiratory chain NADH dehydrogenase (Complex I) which catalyzes electron transfer from NADH through the respiratory chain, using ubiquinone as an electron acceptor. Part of the enzyme membrane arm which is embedded in the lipid bilayer and involved in proton translocation. This Eubalaena australis (Southern right whale) protein is NADH-ubiquinone oxidoreductase chain 4L (MT-ND4L).